The sequence spans 219 residues: MNFNLIDINHWSRKPYFEHYLNNVKCTYSMTANIEITDLLYEIKLKNIKFYPTLIYMIATVVNNHKEFRICFDHKGSLGYWDSMNPSYTIFHKENETFSSIWTEYNKSFLRFYSDYLDDIKNYGNIMKFTPKSNEPDNTFSVSSIPWVSFTGFNLNVYNEGTYLIPIFTAGKYFKQENKIFIPISIQVHHAICDGYHASRFINEMQELAFSFQEWLENK.

The active-site Proton acceptor is His-190.

This sequence belongs to the chloramphenicol acetyltransferase family. In terms of assembly, homotrimer.

The catalysed reaction is chloramphenicol + acetyl-CoA = chloramphenicol 3-acetate + CoA. In terms of biological role, this enzyme is an effector of chloramphenicol resistance in bacteria. In Clostridium butyricum, this protein is Chloramphenicol acetyltransferase (catB).